The primary structure comprises 871 residues: Nonsense-mediated mRNA decay factor SMG8 (871 aa).

A disordered region spans residues 541–596 (LDDMELPESLQQSYTSSEDSSEDDDDFAIQTASSEDSLSGSDSYARPGSRRDEFES). Low complexity predominate over residues 573-583 (SSEDSLSGSDS).

The protein belongs to the SMG8 family.

Involved in nonsense-mediated decay (NMD) of mRNAs containing premature stop codons. Probable component of kinase complex containing smg-1 and recruited to stalled ribosomes. This Caenorhabditis briggsae protein is Nonsense-mediated mRNA decay factor SMG8 (smg-8).